The primary structure comprises 248 residues: Adenosylcobinamide-GDP ribazoletransferase (248 aa).

6 helical membrane-spanning segments follow: residues 36-56, 59-79, 114-134, 137-157, 170-190, and 199-219; these read FFLP…YLGL, FLPA…VTGG, GTIA…SLVL, YSIA…FLCL, IFIG…ILAL, and ATII…LLCL.

Belongs to the CobS family. Mg(2+) is required as a cofactor.

The protein resides in the cell membrane. The catalysed reaction is alpha-ribazole + adenosylcob(III)inamide-GDP = adenosylcob(III)alamin + GMP + H(+). It carries out the reaction alpha-ribazole 5'-phosphate + adenosylcob(III)inamide-GDP = adenosylcob(III)alamin 5'-phosphate + GMP + H(+). The protein operates within cofactor biosynthesis; adenosylcobalamin biosynthesis; adenosylcobalamin from cob(II)yrinate a,c-diamide: step 7/7. Its function is as follows. Joins adenosylcobinamide-GDP and alpha-ribazole to generate adenosylcobalamin (Ado-cobalamin). Also synthesizes adenosylcobalamin 5'-phosphate from adenosylcobinamide-GDP and alpha-ribazole 5'-phosphate. The polypeptide is Adenosylcobinamide-GDP ribazoletransferase (Clostridium botulinum (strain Kyoto / Type A2)).